Here is a 150-residue protein sequence, read N- to C-terminus: Lipoprotein signal peptidase (150 aa).

3 helical membrane-spanning segments follow: residues 5 to 25 (LSLV…NWVV), 59 to 79 (QQWF…WFLW), and 83 to 103 (GQNW…GNFI). Active-site residues include Asp113 and Asp129. A helical transmembrane segment spans residues 124-144 (IFNIADILLSVGFVVLFIAIL).

The protein belongs to the peptidase A8 family.

It localises to the cell membrane. The enzyme catalyses Release of signal peptides from bacterial membrane prolipoproteins. Hydrolyzes -Xaa-Yaa-Zaa-|-(S,diacylglyceryl)Cys-, in which Xaa is hydrophobic (preferably Leu), and Yaa (Ala or Ser) and Zaa (Gly or Ala) have small, neutral side chains.. The protein operates within protein modification; lipoprotein biosynthesis (signal peptide cleavage). Its function is as follows. This protein specifically catalyzes the removal of signal peptides from prolipoproteins. The sequence is that of Lipoprotein signal peptidase from Lactococcus lactis subsp. cremoris (strain MG1363).